The chain runs to 865 residues: MSDTTAPAFDFQDREPFWQNEWKRRNTFAVPDVPPADRPKYYVLEMFPYPSGQLHVGHVRNYTLGDVVARYKRARGFAVMHPMGWDAFGLPAENAARERNVHPGKWTMDNIATMRGTLQRLGFSLDWDREIATCLPEYYGKQQKLFTDMLGAGLVERRDSLVNWDPVDETVLANEQVVDGRGWRSGALIEKKKLSQWFLKITKFAQPLLDDLKTLDRWPERVRTMQERWIGRSEGARVRFALHQPPAGYDEDLDSVEVFTTRPDTLFGLSFIGISAEHPLARKVAESNPQAAAFIEECRRLGTSEEVIEAAEKRGFDTGLRVANPLDPEKTAPVWIANFVLMDYGTGAVFGCPCGDQRDLDFARKYDLPVPQVLLPPGQDAETFVLGKKAVSGDATLFNSGFLDGLDPAAARTKVIERLEGLGAGKGVVNWRLRDWGISRQRYWGCPIPIIHCDTCGPVPVPDEQLPVILPEDVTFDRPGNPLDHHPTWKHVNCPHCGKPAVRETDTFDTFVDSSWYFARFTSPHAETPTVPAAANGWLPVDQYIGGIEHAILHLLYARFFTRAMHETGHLDVDEPFAGLFTQGMVTHESYRDDSGWLYPEEVERQGDQVVRRETGTPVQVGRSEKMSKSKRNTVSPVDIIERYGADTARWFVLSDSPPERDMEWTAAGVAAAARFGQRLHRLVASVAARDAADSAHGATGDDLRRVTHRTIAAVGEALEAFTPNVAVARLHELTSALADAERIEGAGIAAARREAARVLCLLTAPMMPHLAEDMMAVLEPGSALVVERPWPEAEEKWLAVQSVTIGVQILGKLRGTIEVPPNAPKEEVLAAAKSEPNVARLLEGKRLVKEIHVPNRIVNFVVAG.

The 'HIGH' region signature appears at 48 to 58 (PYPSGQLHVGH). The 'KMSKS' region signature appears at 626–630 (KMSKS). An ATP-binding site is contributed by lysine 629.

The protein belongs to the class-I aminoacyl-tRNA synthetase family.

The protein localises to the cytoplasm. The enzyme catalyses tRNA(Leu) + L-leucine + ATP = L-leucyl-tRNA(Leu) + AMP + diphosphate. The sequence is that of Leucine--tRNA ligase from Gluconobacter oxydans (strain 621H) (Gluconobacter suboxydans).